Consider the following 398-residue polypeptide: Dual-specificity RNA methyltransferase RlmN (398 aa).

The active-site Proton acceptor is the E119. The 240-residue stretch at 125 to 364 folds into the Radical SAM core domain; that stretch reads EGDRATLCVS…TIVRKTRGDD (240 aa). A disulfide bridge links C132 with C369. The [4Fe-4S] cluster site is built by C139, C143, and C146. S-adenosyl-L-methionine contacts are provided by residues 193–194, S225, 247–249, and N326; these read GE and SLH. C369 serves as the catalytic S-methylcysteine intermediate.

This sequence belongs to the radical SAM superfamily. RlmN family. It depends on [4Fe-4S] cluster as a cofactor.

The protein resides in the cytoplasm. It catalyses the reaction adenosine(2503) in 23S rRNA + 2 reduced [2Fe-2S]-[ferredoxin] + 2 S-adenosyl-L-methionine = 2-methyladenosine(2503) in 23S rRNA + 5'-deoxyadenosine + L-methionine + 2 oxidized [2Fe-2S]-[ferredoxin] + S-adenosyl-L-homocysteine. It carries out the reaction adenosine(37) in tRNA + 2 reduced [2Fe-2S]-[ferredoxin] + 2 S-adenosyl-L-methionine = 2-methyladenosine(37) in tRNA + 5'-deoxyadenosine + L-methionine + 2 oxidized [2Fe-2S]-[ferredoxin] + S-adenosyl-L-homocysteine. Functionally, specifically methylates position 2 of adenine 2503 in 23S rRNA and position 2 of adenine 37 in tRNAs. m2A2503 modification seems to play a crucial role in the proofreading step occurring at the peptidyl transferase center and thus would serve to optimize ribosomal fidelity. The sequence is that of Dual-specificity RNA methyltransferase RlmN from Yersinia enterocolitica serotype O:8 / biotype 1B (strain NCTC 13174 / 8081).